We begin with the raw amino-acid sequence, 167 residues long: SsrA-binding protein (167 aa).

The segment at 139–167 (QAHDKRHAEKEREWQRDKQRIMRAHNRNA) is disordered. Positions 144–158 (RHAEKEREWQRDKQR) are enriched in basic and acidic residues.

Belongs to the SmpB family.

It localises to the cytoplasm. In terms of biological role, required for rescue of stalled ribosomes mediated by trans-translation. Binds to transfer-messenger RNA (tmRNA), required for stable association of tmRNA with ribosomes. tmRNA and SmpB together mimic tRNA shape, replacing the anticodon stem-loop with SmpB. tmRNA is encoded by the ssrA gene; the 2 termini fold to resemble tRNA(Ala) and it encodes a 'tag peptide', a short internal open reading frame. During trans-translation Ala-aminoacylated tmRNA acts like a tRNA, entering the A-site of stalled ribosomes, displacing the stalled mRNA. The ribosome then switches to translate the ORF on the tmRNA; the nascent peptide is terminated with the 'tag peptide' encoded by the tmRNA and targeted for degradation. The ribosome is freed to recommence translation, which seems to be the essential function of trans-translation. The sequence is that of SsrA-binding protein from Xylella fastidiosa (strain 9a5c).